The primary structure comprises 70 residues: Beta sliding clamp (70 aa).

It belongs to the beta sliding clamp family. Forms a ring-shaped head-to-tail homodimer around DNA which binds and tethers DNA polymerases and other proteins to the DNA. The DNA replisome complex has a single clamp-loading complex (3 tau and 1 each of delta, delta', psi and chi subunits) which binds 3 Pol III cores (1 core on the leading strand and 2 on the lagging strand) each with a beta sliding clamp dimer. Additional proteins in the replisome are other copies of gamma, psi and chi, Ssb, DNA helicase and RNA primase.

Its subcellular location is the cytoplasm. Functionally, confers DNA tethering and processivity to DNA polymerases and other proteins. Acts as a clamp, forming a ring around DNA (a reaction catalyzed by the clamp-loading complex) which diffuses in an ATP-independent manner freely and bidirectionally along dsDNA. Initially characterized for its ability to contact the catalytic subunit of DNA polymerase III (Pol III), a complex, multichain enzyme responsible for most of the replicative synthesis in bacteria; Pol III exhibits 3'-5' exonuclease proofreading activity. The beta chain is required for initiation of replication as well as for processivity of DNA replication. The protein is Beta sliding clamp (dnaN) of Rhodobacter capsulatus (Rhodopseudomonas capsulata).